Here is a 135-residue protein sequence, read N- to C-terminus: CDGSH iron-sulfur domain-containing protein 2A (135 aa).

At 1 to 37 (MVLESIARVIKVQLPAYLKRLPIPDSIAGFIRLTVSE) the chain is on the lumenal side. The helical transmembrane segment at 38–60 (WLRLLPFLGVLALLGYLAIRPFL) threads the bilayer. Topologically, residues 61–135 (LKKKQQKDSL…GPLILKKKEV (75 aa)) are cytoplasmic. [2Fe-2S] cluster-binding residues include cysteine 99, cysteine 101, cysteine 110, and histidine 114.

This sequence belongs to the CISD protein family. CISD2 subfamily. In terms of assembly, homodimer. [2Fe-2S] cluster is required as a cofactor.

It localises to the endoplasmic reticulum membrane. It is found in the mitochondrion outer membrane. Functionally, regulator of autophagy that contributes to antagonize becn1-mediated cellular autophagy at the endoplasmic reticulum. Participates in the interaction of bcl2 with becn1 and is required for bcl2-mediated depression of endoplasmic reticulum Ca(2+) stores during autophagy. The polypeptide is CDGSH iron-sulfur domain-containing protein 2A (cisd2-a) (Xenopus laevis (African clawed frog)).